The chain runs to 344 residues: tRNA N6-adenosine threonylcarbamoyltransferase (344 aa).

His110 and His114 together coordinate Fe cation. Substrate is bound by residues 133 to 137 (VMSGA), Asp166, Gly179, and Asn278. Asp303 is a binding site for Fe cation.

Belongs to the KAE1 / TsaD family. The cofactor is Fe(2+).

The protein localises to the cytoplasm. It carries out the reaction L-threonylcarbamoyladenylate + adenosine(37) in tRNA = N(6)-L-threonylcarbamoyladenosine(37) in tRNA + AMP + H(+). In terms of biological role, required for the formation of a threonylcarbamoyl group on adenosine at position 37 (t(6)A37) in tRNAs that read codons beginning with adenine. Is involved in the transfer of the threonylcarbamoyl moiety of threonylcarbamoyl-AMP (TC-AMP) to the N6 group of A37, together with TsaE and TsaB. TsaD likely plays a direct catalytic role in this reaction. This is tRNA N6-adenosine threonylcarbamoyltransferase from Chlamydia felis (strain Fe/C-56) (Chlamydophila felis).